A 431-amino-acid polypeptide reads, in one-letter code: SH2 domain-containing protein 4B (431 aa).

The disordered stretch occupies residues 201–235; sequence QASENEEREWEEQLRRSKAADEERSRRAQRARDEY. Basic and acidic residues predominate over residues 211 to 235; the sequence is EEQLRRSKAADEERSRRAQRARDEY. The SH2 domain maps to 325–417; that stretch reads WFHGIISRES…SGGELLQEPC (93 aa).

This Mus musculus (Mouse) protein is SH2 domain-containing protein 4B (Sh2d4b).